Consider the following 93-residue polypeptide: Putative septation protein SpoVG (93 aa).

It belongs to the SpoVG family.

Could be involved in septation. The sequence is that of Putative septation protein SpoVG from Treponema denticola (strain ATCC 35405 / DSM 14222 / CIP 103919 / JCM 8153 / KCTC 15104).